Consider the following 612-residue polypeptide: 2-isopropylmalate synthase B (612 aa).

The Pyruvate carboxyltransferase domain maps to Val-71–Leu-344. The a divalent metal cation site is built by Asp-80, His-277, and Asn-313.

This sequence belongs to the alpha-IPM synthase/homocitrate synthase family. LeuA type 1 subfamily. In terms of assembly, homodimer. The cofactor is a divalent metal cation.

It catalyses the reaction 3-methyl-2-oxobutanoate + acetyl-CoA + H2O = (2S)-2-isopropylmalate + CoA + H(+). It functions in the pathway amino-acid biosynthesis; L-leucine biosynthesis; L-leucine from 3-methyl-2-oxobutanoate: step 1/4. In terms of biological role, catalyzes the condensation of the acetyl group of acetyl-CoA with 3-methyl-2-oxobutanoate (2-oxoisovalerate) to form 3-carboxy-3-hydroxy-4-methylpentanoate (2-isopropylmalate). The chain is 2-isopropylmalate synthase B (IPMSB) from Solanum pennellii (Tomato).